A 226-amino-acid polypeptide reads, in one-letter code: Large ribosomal subunit protein uL1 (226 aa).

The protein belongs to the universal ribosomal protein uL1 family. Part of the 50S ribosomal subunit.

Functionally, binds directly to 23S rRNA. The L1 stalk is quite mobile in the ribosome, and is involved in E site tRNA release. Its function is as follows. Protein L1 is also a translational repressor protein, it controls the translation of the L11 operon by binding to its mRNA. The polypeptide is Large ribosomal subunit protein uL1 (Selenomonas ruminantium).